The sequence spans 818 residues: MSSSTDDAGTTTHSLQEFKLFETQSNFYMIGWDGSGVYRVLKIDRLDPSELNISQDSTHYTKKECYELLKRIHEGNKATGGLKLVTLCYGIIGFVKFLGPYYMLLITERRHIGDLFGHSVYAVSKSEIVALHNSTVQCNFANSRDENRYKRLLCMVDLTKDFFFSYSYNVMRSYQKNVCNYETGHNLYEKMFVWNEFLTRGIRHHLRNTLWTVALVYGFFKQASLSESGKDFKITLIARRSRHNAGTRYLKRGVNRNGDVANDVETEQIVSEDVPEDHPMQISSVVQNRGSIPLFWSQETSRLNLKPDIVLSKKEPNYEATRLHFDNLVERYGNPIIILNLIKTKERRPRESILREEFVNAIDFINKDLPEENRLRFLHWDLHKHFRSKTKNVLALLCKVATCALMLTDLFYYQVTPAMTIEDSMSLSSSSDADTGDISPHTSSDDDNGDHDSLEKKSSRSKNIAYGKCDVKPPRLQSGVLRTNCIDCLDRTNVAQYAYGWAALGQQLHVLGIRDVPAIELDDPLAISLMGLYERMGDTLAHQYGGSAAHNKVFSERRGQWRAATQSQEFLRTLQRYYNNAYMDADKQDAINIFLGTFQPEQGMPAIWELRSNSLSNGRNGEMNIGKDERFLVKRCLSDGDFLHESCTPLSAMSSNHESMPQKGFSAPLQHVSHILSESSSDIPVSNDVALSRCTPSMPRKQLFGDVQKVHRFGSDQVYFGGEEDMSSVSNFVDIEWLSSENPCENALFDRSSELTRNLTAETSSTENSVNGVGQSAPTISESGSSSSKGKEPMGTKIREDFPDSFKEWVAYGEALCH.

Residues 153–546 (LCMVDLTKDF…GDTLAHQYGG (394 aa)) enclose the SAC domain. The segment at 426-459 (SLSSSSDADTGDISPHTSSDDDNGDHDSLEKKSS) is disordered. The Phosphatase catalytic core signature appears at 482–493 (RTNCIDCLDRTN). Polar residues predominate over residues 759–780 (LTAETSSTENSVNGVGQSAPTI). A disordered region spans residues 759-800 (LTAETSSTENSVNGVGQSAPTISESGSSSSKGKEPMGTKIRE). Over residues 789 to 800 (KGKEPMGTKIRE) the composition is skewed to basic and acidic residues.

As to quaternary structure, component of the PI(3,5)P2 regulatory complex at least composed of ATG18, SAC/FIG4, FAB1 and VAC14. The cofactor is Mg(2+). In terms of tissue distribution, ubiquitous with a higher level of expression in young seedlings than in other tissues.

Its subcellular location is the vacuole membrane. The enzyme catalyses a 1,2-diacyl-sn-glycero-3-phospho-(1D-myo-inositol-3,5-bisphosphate) + H2O = a 1,2-diacyl-sn-glycero-3-phospho-(1D-myo-inositol-3-phosphate) + phosphate. Its function is as follows. The PI(3,5)P2 regulatory complex regulates both the synthesis and turnover of phosphatidylinositol 3,5-bisphosphate (PtdIns(3,5)P2). This Arabidopsis thaliana (Mouse-ear cress) protein is Phosphoinositide phosphatase SAC3 (SAC3).